The following is a 416-amino-acid chain: Adenylosuccinate synthetase (416 aa).

GTP-binding positions include 11 to 17 and 39 to 41; these read GDEGKGK and GHT. Residue D12 is the Proton acceptor of the active site. Residues D12 and G39 each contribute to the Mg(2+) site. Residues 12–15, 37–40, T125, R139, Q214, T229, and R290 each bind IMP; these read DEGK and NAGH. H40 functions as the Proton donor in the catalytic mechanism. 286-292 serves as a coordination point for substrate; it reads TTTGRPR. Residues R292, 318 to 320, and 405 to 407 each bind GTP; these read KLD and SLG.

It belongs to the adenylosuccinate synthetase family. As to quaternary structure, homodimer. The cofactor is Mg(2+).

It localises to the cytoplasm. It catalyses the reaction IMP + L-aspartate + GTP = N(6)-(1,2-dicarboxyethyl)-AMP + GDP + phosphate + 2 H(+). The protein operates within purine metabolism; AMP biosynthesis via de novo pathway; AMP from IMP: step 1/2. Its function is as follows. Plays an important role in the de novo pathway of purine nucleotide biosynthesis. Catalyzes the first committed step in the biosynthesis of AMP from IMP. This Picrophilus torridus (strain ATCC 700027 / DSM 9790 / JCM 10055 / NBRC 100828 / KAW 2/3) protein is Adenylosuccinate synthetase.